Here is a 31-residue protein sequence, read N- to C-terminus: Cyclotide mra3 (31 aa).

Intrachain disulfides connect Cys-5/Cys-21, Cys-9/Cys-23, and Cys-14/Cys-28.

Post-translationally, this is a cyclic peptide. Contains 3 disulfide bonds.

Its function is as follows. Probably participates in a plant defense mechanism. The chain is Cyclotide mra3 from Melicytus ramiflorus (Whitey wood).